Consider the following 235-residue polypeptide: Derlin-3 (235 aa).

Topologically, residues Met1–Ala22 are cytoplasmic. The helical transmembrane segment at Ala23 to Phe43 threads the bilayer. The Lumenal portion of the chain corresponds to Asn44 to Val58. The chain crosses the membrane as a helical span at residues Thr59 to Phe79. The Cytoplasmic segment spans residues Arg80–Val98. A helical membrane pass occupies residues Phe99–Phe119. At Leu120 to Ala157 the chain is on the lumenal side. Residues Leu158 to Val178 traverse the membrane as a helical segment. Topologically, residues Gly179–Gln235 are cytoplasmic. A disordered region spans residues Pro216–Gln235. A compositionally biased stretch (pro residues) spans Glu223–Gln235.

It belongs to the derlin family. Forms homo- and heterooligomers with DERL2 and, to a lesser extent, with DERL1. Interacts with VCP and EDEM1. Interacts with SELENOK and SELENOS. Interacts with the signal recognition particle/SRP and the SRP receptor; in the process of endoplasmic reticulum stress-induced pre-emptive quality control. In terms of tissue distribution, unlike DERL1 and DERL2, restricted to several tissues. Expressed at high levels in placenta, pancreas, spleen and small intestine.

The protein localises to the endoplasmic reticulum membrane. Functional component of endoplasmic reticulum-associated degradation (ERAD) for misfolded lumenal glycoproteins, but not that of misfolded nonglycoproteins. May act by forming a channel that allows the retrotranslocation of misfolded glycoproteins into the cytosol where they are ubiquitinated and degraded by the proteasome. May mediate the interaction between VCP and the misfolded glycoproteins. May be involved in endoplasmic reticulum stress-induced pre-emptive quality control, a mechanism that selectively attenuates the translocation of newly synthesized proteins into the endoplasmic reticulum and reroutes them to the cytosol for proteasomal degradation. The chain is Derlin-3 from Homo sapiens (Human).